Consider the following 220-residue polypeptide: Large ribosomal subunit protein uL4 (220 aa).

Residues 45–102 form a disordered region; sequence AARQGTHKTKTRGEVRGGGRKPFRQKGTGRARQGSIRAPHYTGGGTVHGPVPRDYSQR. The span at 62–73 shows a compositional bias: basic residues; sequence GGRKPFRQKGTG.

It belongs to the universal ribosomal protein uL4 family. Part of the 50S ribosomal subunit.

Its function is as follows. One of the primary rRNA binding proteins, this protein initially binds near the 5'-end of the 23S rRNA. It is important during the early stages of 50S assembly. It makes multiple contacts with different domains of the 23S rRNA in the assembled 50S subunit and ribosome. In terms of biological role, forms part of the polypeptide exit tunnel. This Corynebacterium aurimucosum (strain ATCC 700975 / DSM 44827 / CIP 107346 / CN-1) (Corynebacterium nigricans) protein is Large ribosomal subunit protein uL4.